The sequence spans 402 residues: Argininosuccinate synthase (402 aa).

Residue 9–17 (AYSGGLDTS) coordinates ATP. Tyrosine 86 lines the L-citrulline pocket. Glycine 116 is a binding site for ATP. Residues threonine 118, asparagine 122, and aspartate 123 each coordinate L-aspartate. An L-citrulline-binding site is contributed by asparagine 122. 5 residues coordinate L-citrulline: arginine 126, serine 174, serine 183, glutamate 259, and tyrosine 271.

It belongs to the argininosuccinate synthase family. Type 1 subfamily. In terms of assembly, homotetramer.

The protein localises to the cytoplasm. It catalyses the reaction L-citrulline + L-aspartate + ATP = 2-(N(omega)-L-arginino)succinate + AMP + diphosphate + H(+). Its pathway is amino-acid biosynthesis; L-arginine biosynthesis; L-arginine from L-ornithine and carbamoyl phosphate: step 2/3. This Geobacillus sp. (strain WCH70) protein is Argininosuccinate synthase.